The sequence spans 396 residues: Methylthioribose kinase (396 aa).

ATP-binding positions include asparagine 44, lysine 61, and 115-117; that span reads EDL. Position 233 (aspartate 233) interacts with substrate. 250–252 serves as a coordination point for ATP; sequence DPE. Residue arginine 340 coordinates substrate.

Belongs to the methylthioribose kinase family. In terms of assembly, homodimer.

The catalysed reaction is 5-(methylsulfanyl)-D-ribose + ATP = 5-(methylsulfanyl)-alpha-D-ribose 1-phosphate + ADP + H(+). It functions in the pathway amino-acid biosynthesis; L-methionine biosynthesis via salvage pathway; S-methyl-5-thio-alpha-D-ribose 1-phosphate from S-methyl-5'-thioadenosine (hydrolase route): step 2/2. Catalyzes the phosphorylation of methylthioribose into methylthioribose-1-phosphate. The protein is Methylthioribose kinase of Geobacillus kaustophilus (strain HTA426).